Here is a 346-residue protein sequence, read N- to C-terminus: N-acetyl-gamma-glutamyl-phosphate reductase (346 aa).

Residue Cys149 is part of the active site.

This sequence belongs to the NAGSA dehydrogenase family. Type 1 subfamily.

The protein resides in the cytoplasm. The enzyme catalyses N-acetyl-L-glutamate 5-semialdehyde + phosphate + NADP(+) = N-acetyl-L-glutamyl 5-phosphate + NADPH + H(+). It participates in amino-acid biosynthesis; L-arginine biosynthesis; N(2)-acetyl-L-ornithine from L-glutamate: step 3/4. Its function is as follows. Catalyzes the NADPH-dependent reduction of N-acetyl-5-glutamyl phosphate to yield N-acetyl-L-glutamate 5-semialdehyde. This Desulfotalea psychrophila (strain LSv54 / DSM 12343) protein is N-acetyl-gamma-glutamyl-phosphate reductase.